A 512-amino-acid polypeptide reads, in one-letter code: Probable malate:quinone oxidoreductase (512 aa).

Belongs to the MQO family. FAD serves as cofactor.

It catalyses the reaction (S)-malate + a quinone = a quinol + oxaloacetate. The protein operates within carbohydrate metabolism; tricarboxylic acid cycle; oxaloacetate from (S)-malate (quinone route): step 1/1. The sequence is that of Probable malate:quinone oxidoreductase from Rhodococcus erythropolis (strain PR4 / NBRC 100887).